Reading from the N-terminus, the 262-residue chain is MTLQARNLTLARGGAPILTDVSLTLAPGALVGLLGANGAGKSTLLAALAGELAPRSGQVFLGDADLATLSARQLARRRAVLPQKPSLSFDLGVSDVVGMGAYPFPELDPAAVRQLVRDALEQAGVTHLAQRRYPQLSGGEQQRVQFARVLAQCHAMHAPGQTRYLMLDEPISNLDPRHQMELLATARALAHEAGMGVLVIVHDINQAARWCDTLALLADGRLAALGPPADVLTPDHMRRVYGIEADVLAHPTLPGRLLVLAR.

One can recognise an ABC transporter domain in the interval 3–244 (LQARNLTLAR…DHMRRVYGIE (242 aa)). Residue 35–42 (GANGAGKS) coordinates ATP.

This sequence belongs to the ABC transporter superfamily. Heme (hemin) importer (TC 3.A.1.14.5) family. As to quaternary structure, the complex is composed of two ATP-binding proteins (HmuV), two transmembrane proteins (HmuU) and a solute-binding protein (HmuT).

The protein localises to the cell inner membrane. In terms of biological role, part of the ABC transporter complex HmuTUV involved in hemin import. Responsible for energy coupling to the transport system. This chain is Hemin import ATP-binding protein HmuV, found in Bordetella pertussis (strain Tohama I / ATCC BAA-589 / NCTC 13251).